The sequence spans 217 residues: Kunitz-type trypsin inhibitor-like 1 protein (217 aa).

The N-terminal stretch at 1–26 (MKPLSPLTLSFFLFVFITNLSLAFSN) is a signal peptide. 2 cysteine pairs are disulfide-bonded: C70–C115 and C168–C175. N191 carries N-linked (GlcNAc...) asparagine glycosylation.

It belongs to the protease inhibitor I3 (leguminous Kunitz-type inhibitor) family. Expressed in roots, leaves, epidermal layers of elongating stems, meristems and in the vascular system.

It is found in the secreted. Might act as a protease inhibitor involved in plant defense responses. The chain is Kunitz-type trypsin inhibitor-like 1 protein (PIP20-1) from Pisum sativum (Garden pea).